Reading from the N-terminus, the 200-residue chain is MARCKS-related protein (200 aa).

A disordered region spans residues 1-200 (MGSQSSKAPR…PTPASAEQNE (200 aa)). The N-myristoyl glycine moiety is linked to residue G2. At T14 the chain carries Phosphothreonine. Positions 16–26 (EEAAGASPAKA) are enriched in low complexity. A phosphoserine mark is found at S22, S36, and S48. Residues 53 to 64 (GTDEAAGATGDA) are compositionally biased toward low complexity. S71 bears the Phosphoserine mark. Positions 74 to 85 (AEAKGEVAPKET) are enriched in basic and acidic residues. A Phosphothreonine modification is found at T85. Over residues 86-98 (PKKKKKFSFKKPF) the composition is skewed to basic residues. Positions 87-110 (KKKKKFSFKKPFKLSGLSFKRNRK) are effector domain involved in lipid-binding and calmodulin-binding. Phosphoserine; by PKC occurs at positions 93, 101, and 104. Residue S119 is modified to Phosphoserine. S120 bears the Phosphoserine; by MAPK8 mark. S132 and S135 each carry phosphoserine. T148 carries the post-translational modification Phosphothreonine; by MAPK8. S151, S162, and S165 each carry phosphoserine. Residues 156–165 (AKGAEASAAS) show a composition bias toward low complexity. Position 170 is a phosphothreonine (T170). Low complexity predominate over residues 178–200 (AAEPSTPSGPESGPTPASAEQNE). The residue at position 183 (T183) is a Phosphothreonine; by MAPK8. Residue T192 is modified to Phosphothreonine.

It belongs to the MARCKS family. Binds to filamentous actin (F-actin), but not to monomeric G-actin, independently of its phosphorylation status. Interacts with calmodulin. In terms of processing, phosphorylated. Phosphorylation at Ser-120 and Thr-183 is non-redundantly catalyzed by MAPK8 in vivo. Phosphorylation at Thr-148 is preferentially catalyzed by MAPK8 in vivo, but this modification can also be catalyzed by other kinases in the absence of MAPK8. May be phosphorylated by protein kinase C, which disrupts the interaction with calmodulin. In terms of tissue distribution, expressed at high levels in brain cortex and hippocampus, including dentate gyrus, anterior olfactory nucleus, primary olfactory cortex, entorhinal cortex, medial preoptic area and dorsomedial hypothalamic nucleus (at protein level). Expressed in neuronal cells (at protein level). Detected in the retina. Strongly expressed in testis and uterus; expressed at lower levels in cerebellum, cerebrum, adipose tissue, spleen, kidney, thyroid, liver, lung, skeletal muscle and heart. Detected in T-cells and B-cells.

The protein localises to the cytoplasm. It localises to the cytoskeleton. It is found in the cell membrane. In terms of biological role, involved in the control of cell movement by regulating actin cytoskeleton homeostasis and filopodium and lamellipodium formation. When unphosphorylated, induces cell migration. When phosphorylated by MAPK8, induces actin bundles formation and stabilization, thereby reducing actin plasticity, hence restricting cell movement, including neuronal migration. May be involved in coupling the protein kinase C and calmodulin signal transduction systems. The protein is MARCKS-related protein (Marcksl1) of Mus musculus (Mouse).